The chain runs to 489 residues: Palmitoyltransferase ZDHHC14 (489 aa).

The Cytoplasmic segment spans residues 1-60 (MPPGGGGPMKDCEYSQISTHSSSPMESPHKKKKIAARRKWEVFPGRNKFFCNGRIMMARQ). A helical membrane pass occupies residues 61-81 (TGVFYLTLILILVTSGLFFAF). Residues 82–89 (DCRYLAEK) are Lumenal-facing. The helical transmembrane segment at 90–110 (ITPAIPVVGGILFFFVMGTLL) threads the bilayer. The Cytoplasmic segment spans residues 111 to 208 (RTSFSDPGVL…GNCVGKRNYR (98 aa)). The DHHC domain occupies 165 to 215 (KYCFTCKIFRPPRASHCSLCDNCVEQFDHHCPWVGNCVGKRNYRFFYMFIL). Catalysis depends on C195, which acts as the S-palmitoyl cysteine intermediate. The chain crosses the membrane as a helical span at residues 209–229 (FFYMFILSLSFLTVFIFAFVI). Residues 230-255 (THVIHRSQQKGFLDALKDSPASVLEA) lie on the Lumenal side of the membrane. A helical membrane pass occupies residues 256–276 (VICFFSVWSIIGLSGFHTYLI). The Cytoplasmic segment spans residues 277–489 (SSNQTTNEDI…VRGLVKLSSV (213 aa)). The segment at 434-454 (HGGHQFLTPDEAPSPPRMLGA) is disordered. S456 is subject to Phosphoserine.

The protein belongs to the DHHC palmitoyltransferase family. ERF2/ZDHHC9 subfamily.

It localises to the endoplasmic reticulum membrane. The protein resides in the golgi apparatus membrane. It catalyses the reaction L-cysteinyl-[protein] + hexadecanoyl-CoA = S-hexadecanoyl-L-cysteinyl-[protein] + CoA. Functionally, palmitoyltransferase that could catalyze the addition of palmitate onto various protein substrates. May have a palmitoyltransferase activity toward the beta-2 adrenergic receptor/ADRB2 and thereby regulate G protein-coupled receptor signaling. May play a role in cell differentiation and apoptosis. In Mus musculus (Mouse), this protein is Palmitoyltransferase ZDHHC14.